Consider the following 156-residue polypeptide: RNA pyrophosphohydrolase (156 aa).

Positions 6–148 (NYRPNVAAIV…KKNIYVKVIK (143 aa)) constitute a Nudix hydrolase domain. Positions 43–64 (GGIDKGESAKNALFRELKEEIG) match the Nudix box motif.

It belongs to the Nudix hydrolase family. RppH subfamily. Requires a divalent metal cation as cofactor.

Accelerates the degradation of transcripts by removing pyrophosphate from the 5'-end of triphosphorylated RNA, leading to a more labile monophosphorylated state that can stimulate subsequent ribonuclease cleavage. This Campylobacter jejuni subsp. doylei (strain ATCC BAA-1458 / RM4099 / 269.97) protein is RNA pyrophosphohydrolase.